We begin with the raw amino-acid sequence, 84 residues long: Beta-toxin Ct16 (84 aa).

A signal peptide spans 1 to 19; the sequence is MNYFILLFVATFLLLDVNC. The LCN-type CS-alpha/beta domain maps to 21 to 80; it reads KDGYPVDANNCKFECWKNEYCDELCKAKRAESGYCYKLKLSCWCEGLPDDEPTKTSDRCY. 4 disulfide bridges follow: cysteine 31–cysteine 79, cysteine 35–cysteine 55, cysteine 41–cysteine 62, and cysteine 45–cysteine 64. Threonine 82 carries the post-translational modification Threonine amide.

Belongs to the long (4 C-C) scorpion toxin superfamily. Sodium channel inhibitor family. Alpha subfamily. As to expression, expressed by the venom gland.

The protein localises to the secreted. In terms of biological role, alpha toxins bind voltage-independently at site-3 of sodium channels (Nav) and inhibit the inactivation of the activated channels, thereby blocking neuronal transmission. Is possibly toxic to mice. This is Beta-toxin Ct16 from Centruroides tecomanus (Scorpion).